The following is a 241-amino-acid chain: 2,3,4,5-tetrahydropyridine-2,6-dicarboxylate N-acetyltransferase (241 aa).

This sequence belongs to the transferase hexapeptide repeat family. DapH subfamily.

It catalyses the reaction (S)-2,3,4,5-tetrahydrodipicolinate + acetyl-CoA + H2O = L-2-acetamido-6-oxoheptanedioate + CoA. It participates in amino-acid biosynthesis; L-lysine biosynthesis via DAP pathway; LL-2,6-diaminopimelate from (S)-tetrahydrodipicolinate (acetylase route): step 1/3. Functionally, catalyzes the transfer of an acetyl group from acetyl-CoA to tetrahydrodipicolinate. The chain is 2,3,4,5-tetrahydropyridine-2,6-dicarboxylate N-acetyltransferase from Thermoanaerobacter pseudethanolicus (strain ATCC 33223 / 39E) (Clostridium thermohydrosulfuricum).